Reading from the N-terminus, the 222-residue chain is UPF0173 metal-dependent hydrolase Mboo_0816 (222 aa).

The protein belongs to the UPF0173 family.

This is UPF0173 metal-dependent hydrolase Mboo_0816 from Methanoregula boonei (strain DSM 21154 / JCM 14090 / 6A8).